A 143-amino-acid chain; its full sequence is Large ribosomal subunit protein uL11 (143 aa).

Belongs to the universal ribosomal protein uL11 family. As to quaternary structure, part of the ribosomal stalk of the 50S ribosomal subunit. Interacts with L10 and the large rRNA to form the base of the stalk. L10 forms an elongated spine to which L12 dimers bind in a sequential fashion forming a multimeric L10(L12)X complex. One or more lysine residues are methylated.

Forms part of the ribosomal stalk which helps the ribosome interact with GTP-bound translation factors. This chain is Large ribosomal subunit protein uL11, found in Allorhizobium ampelinum (strain ATCC BAA-846 / DSM 112012 / S4) (Agrobacterium vitis (strain S4)).